The following is a 643-amino-acid chain: Phosphomethylpyrimidine synthase (643 aa).

Residues N248, M277, Y306, H342, 362-364, 403-406, and E442 contribute to the substrate site; these read SRG and DGLR. Residue H446 coordinates Zn(2+). Y469 is a binding site for substrate. H510 lines the Zn(2+) pocket. [4Fe-4S] cluster-binding residues include C590, C593, and C598.

Belongs to the ThiC family. In terms of assembly, homodimer. It depends on [4Fe-4S] cluster as a cofactor.

It carries out the reaction 5-amino-1-(5-phospho-beta-D-ribosyl)imidazole + S-adenosyl-L-methionine = 4-amino-2-methyl-5-(phosphooxymethyl)pyrimidine + CO + 5'-deoxyadenosine + formate + L-methionine + 3 H(+). The protein operates within cofactor biosynthesis; thiamine diphosphate biosynthesis. Catalyzes the synthesis of the hydroxymethylpyrimidine phosphate (HMP-P) moiety of thiamine from aminoimidazole ribotide (AIR) in a radical S-adenosyl-L-methionine (SAM)-dependent reaction. The protein is Phosphomethylpyrimidine synthase of Burkholderia cenocepacia (strain HI2424).